The sequence spans 294 residues: Segregation and condensation protein A (294 aa).

Belongs to the ScpA family. In terms of assembly, component of a cohesin-like complex composed of ScpA, ScpB and the Smc homodimer, in which ScpA and ScpB bind to the head domain of Smc. The presence of the three proteins is required for the association of the complex with DNA.

Its subcellular location is the cytoplasm. Functionally, participates in chromosomal partition during cell division. May act via the formation of a condensin-like complex containing Smc and ScpB that pull DNA away from mid-cell into both cell halves. The sequence is that of Segregation and condensation protein A from Ureaplasma parvum serovar 3 (strain ATCC 700970).